The chain runs to 476 residues: Ubiquinone biosynthesis monooxygenase COQ6, mitochondrial (476 aa).

Residues 1–35 (MAARIGSMAGLLCVRWWSSAQLAARGGPLVASQRW) constitute a mitochondrion transit peptide. Residue Lys219 is modified to N6-succinyllysine.

Belongs to the UbiH/COQ6 family. Component of a multi-subunit COQ enzyme complex, composed of at least COQ3, COQ4, COQ5, COQ6, COQ7 and COQ9. Interacts with COQ8B and COQ7. FAD serves as cofactor. Expressed in the kidney, in podocytes.

It localises to the mitochondrion inner membrane. Its subcellular location is the golgi apparatus. The protein localises to the cell projection. It catalyses the reaction 4-hydroxy-3-(all-trans-decaprenyl)benzoate + 2 reduced [2Fe-2S]-[ferredoxin] + O2 + 2 H(+) = 3,4-dihydroxy-5-(all-trans-decaprenyl)benzoate + 2 oxidized [2Fe-2S]-[ferredoxin] + H2O. It carries out the reaction 2-methoxy-6-(all-trans-decaprenyl)phenol + 2 reduced [2Fe-2S]-[ferredoxin] + O2 + 2 H(+) = 2-methoxy-6-(all-trans-decaprenyl)benzene-1,4-diol + 2 oxidized [2Fe-2S]-[ferredoxin] + H2O. The protein operates within cofactor biosynthesis; ubiquinone biosynthesis. Its function is as follows. FAD-dependent monooxygenase required for two non-consecutive steps during ubiquinone biosynthesis. Required for the C5-ring hydroxylation during ubiquinone biosynthesis by catalyzing the hydroxylation of 4-hydroxy-3-(all-trans-decaprenyl)benzoic acid to 3,4-dihydroxy-5-(all-trans-decaprenyl)benzoic acid. Also acts downstream of COQ4, for the C1-hydroxylation during ubiquinone biosynthesis by catalyzing the hydroxylation of 2-methoxy-6-(all-trans-decaprenyl)phenol to 2-methoxy-6-(all-trans-decaprenyl)benzene-1,4-diol. The electrons required for the hydroxylation reaction are funneled indirectly to COQ6 from NADPH via a ferredoxin/ferredoxin reductase system composed of FDX2 and FDXR. This chain is Ubiquinone biosynthesis monooxygenase COQ6, mitochondrial, found in Mus musculus (Mouse).